A 325-amino-acid chain; its full sequence is Protease HtpX homolog (325 aa).

Residues 20–40 traverse the membrane as a helical segment; that stretch reads IGYLLGGGGGMMIALVIAVAM. Histidine 130 serves as a coordination point for Zn(2+). Glutamate 131 is a catalytic residue. Histidine 134 contacts Zn(2+). 2 helical membrane passes run 145–165 and 173–193; these read IVAT…FLGG and VMGV…AMIV. Glutamate 202 provides a ligand contact to Zn(2+). Residues 286-325 form a disordered region; it reads SAAMTARAAAPSQNSGPWGQRSDNAGGNSNGGSRYRGPWS. Low complexity predominate over residues 306–325; it reads RSDNAGGNSNGGSRYRGPWS.

This sequence belongs to the peptidase M48B family. Zn(2+) is required as a cofactor.

The protein resides in the cell inner membrane. The sequence is that of Protease HtpX homolog from Brucella melitensis biotype 2 (strain ATCC 23457).